The chain runs to 332 residues: Glycerol-3-phosphate dehydrogenase [NAD(P)+] 2 (332 aa).

Residues serine 17, tryptophan 18, arginine 37, and lysine 112 each contribute to the NADPH site. The sn-glycerol 3-phosphate site is built by lysine 112 and glycine 140. An NADPH-binding site is contributed by alanine 144. 5 residues coordinate sn-glycerol 3-phosphate: lysine 195, aspartate 243, serine 253, arginine 254, and asparagine 255. Lysine 195 functions as the Proton acceptor in the catalytic mechanism. Arginine 254 serves as a coordination point for NADPH. 2 residues coordinate NADPH: valine 278 and glutamate 280.

The protein belongs to the NAD-dependent glycerol-3-phosphate dehydrogenase family.

The protein localises to the cytoplasm. It catalyses the reaction sn-glycerol 3-phosphate + NAD(+) = dihydroxyacetone phosphate + NADH + H(+). It carries out the reaction sn-glycerol 3-phosphate + NADP(+) = dihydroxyacetone phosphate + NADPH + H(+). It participates in membrane lipid metabolism; glycerophospholipid metabolism. In terms of biological role, catalyzes the reduction of the glycolytic intermediate dihydroxyacetone phosphate (DHAP) to sn-glycerol 3-phosphate (G3P), the key precursor for phospholipid synthesis. In Mycolicibacterium paratuberculosis (strain ATCC BAA-968 / K-10) (Mycobacterium paratuberculosis), this protein is Glycerol-3-phosphate dehydrogenase [NAD(P)+] 2.